We begin with the raw amino-acid sequence, 122 residues long: Large ribosomal subunit protein bL12 (122 aa).

It belongs to the bacterial ribosomal protein bL12 family. As to quaternary structure, homodimer. Part of the ribosomal stalk of the 50S ribosomal subunit. Forms a multimeric L10(L12)X complex, where L10 forms an elongated spine to which 2 to 4 L12 dimers bind in a sequential fashion. Binds GTP-bound translation factors.

In terms of biological role, forms part of the ribosomal stalk which helps the ribosome interact with GTP-bound translation factors. Is thus essential for accurate translation. This chain is Large ribosomal subunit protein bL12, found in Buchnera aphidicola subsp. Acyrthosiphon pisum (strain Tuc7).